A 173-amino-acid polypeptide reads, in one-letter code: NADH-ubiquinone oxidoreductase chain 6 (173 aa).

5 helical membrane-spanning segments follow: residues 1–21 (MTYL…AVAS), 24–44 (APYF…GVLV), 53–73 (LVLF…SAAL), 86–106 (SVVG…GVFW), and 139–159 (YGGG…FVVL).

It belongs to the complex I subunit 6 family.

The protein resides in the mitochondrion membrane. It carries out the reaction a ubiquinone + NADH + 5 H(+)(in) = a ubiquinol + NAD(+) + 4 H(+)(out). Its function is as follows. Core subunit of the mitochondrial membrane respiratory chain NADH dehydrogenase (Complex I) that is believed to belong to the minimal assembly required for catalysis. Complex I functions in the transfer of electrons from NADH to the respiratory chain. The immediate electron acceptor for the enzyme is believed to be ubiquinone. This chain is NADH-ubiquinone oxidoreductase chain 6 (MT-ND6), found in Formosania lacustris (Oriental stream loach).